The sequence spans 520 residues: ATP synthase subunit alpha (520 aa).

Position 169-176 (169-176) interacts with ATP; it reads GDRKTGKT.

Belongs to the ATPase alpha/beta chains family. F-type ATPases have 2 components, CF(1) - the catalytic core - and CF(0) - the membrane proton channel. CF(1) has five subunits: alpha(3), beta(3), gamma(1), delta(1), epsilon(1). CF(0) has three main subunits: a(1), b(2) and c(9-12). The alpha and beta chains form an alternating ring which encloses part of the gamma chain. CF(1) is attached to CF(0) by a central stalk formed by the gamma and epsilon chains, while a peripheral stalk is formed by the delta and b chains.

It is found in the cell membrane. It carries out the reaction ATP + H2O + 4 H(+)(in) = ADP + phosphate + 5 H(+)(out). Its function is as follows. Produces ATP from ADP in the presence of a proton gradient across the membrane. The alpha chain is a regulatory subunit. The polypeptide is ATP synthase subunit alpha (Oenococcus oeni (strain ATCC BAA-331 / PSU-1)).